The primary structure comprises 213 residues: CASP-like protein UU2 (213 aa).

A disordered region spans residues 1 to 26 (MEDPKGAWQSDVFDNGRDFKPHDKAP). Residues 1-53 (MEDPKGAWQSDVFDNGRDFKPHDKAPANVTAGTTPPMYNVGAGGSEGNSKALS) are Cytoplasmic-facing. Positions 14–25 (DNGRDFKPHDKA) are enriched in basic and acidic residues. Residues 54-74 (IISIVLRCLSIMFNVVSLGVI) traverse the membrane as a helical segment. The Extracellular segment spans residues 75–96 (ASNQGKSYFVVWRTLNSSNMQY). Asn90 carries an N-linked (GlcNAc...) asparagine glycan. The helical transmembrane segment at 97-117 (LFAINVIVLVYCVVQLILSII) threads the bilayer. Residues 118 to 137 (NLVQGKMVLSGPTQPASTIT) lie on the Cytoplasmic side of the membrane. The helical transmembrane segment at 138–158 (YICDQGLTYMLMAGFGAGVAL) threads the bilayer. Residues 159–184 (QASVDKGESGMLDCSGANEFCGKNKA) are Extracellular-facing. Residues 185-205 (SAALSFLGFVCIALSANLNYL) form a helical membrane-spanning segment. Topologically, residues 206–213 (RLYFMAAK) are cytoplasmic.

The protein belongs to the Casparian strip membrane proteins (CASP) family. As to quaternary structure, homodimer and heterodimers.

It localises to the cell membrane. This Physcomitrium patens (Spreading-leaved earth moss) protein is CASP-like protein UU2.